The chain runs to 312 residues: Tetraacyldisaccharide 4'-kinase (312 aa).

60 to 67 contacts ATP; the sequence is IAGGSGKT.

Belongs to the LpxK family.

The catalysed reaction is a lipid A disaccharide + ATP = a lipid IVA + ADP + H(+). Its pathway is glycolipid biosynthesis; lipid IV(A) biosynthesis; lipid IV(A) from (3R)-3-hydroxytetradecanoyl-[acyl-carrier-protein] and UDP-N-acetyl-alpha-D-glucosamine: step 6/6. In terms of biological role, transfers the gamma-phosphate of ATP to the 4'-position of a tetraacyldisaccharide 1-phosphate intermediate (termed DS-1-P) to form tetraacyldisaccharide 1,4'-bis-phosphate (lipid IVA). The polypeptide is Tetraacyldisaccharide 4'-kinase (Helicobacter pylori (strain ATCC 700392 / 26695) (Campylobacter pylori)).